The sequence spans 1040 residues: Multidrug resistance protein MdtB (1040 aa).

11 helical membrane passes run 15-37, 345-362, 367-389, 396-418, 438-460, 472-494, 535-557, 867-889, 909-931, 968-990, and 1000-1022; these read LFIM…GIIG, FELM…YLFL, ATII…MVFL, LTLM…VIEN, GEIG…PLLF, FAIT…TPMM, HPWL…WVFI, VWLI…ESFI, LMIA…IGIV, ILMT…GVGA, and MVGG…YLLF.

This sequence belongs to the resistance-nodulation-cell division (RND) (TC 2.A.6) family. MdtB subfamily. Part of a tripartite efflux system composed of MdtA, MdtB and MdtC. MdtB forms a heteromultimer with MdtC.

The protein localises to the cell inner membrane. The MdtABC tripartite complex confers resistance against novobiocin and deoxycholate. The chain is Multidrug resistance protein MdtB from Escherichia coli O157:H7.